The following is a 628-amino-acid chain: U-box domain-containing protein 10 (628 aa).

The U-box domain maps to 242 to 316; it reads TIPEDFLCPI…SQWCTKHNIE (75 aa). ARM repeat units follow at residues 373-413, 415-454, 456-495, 497-537, and 539-578; these read TDNR…NLSI, EHNKELIMLAGAVTSIVLVLRAGSMEARENAAATLFSLSL, DENKIIIGASGAIMALVDLLQYGSVRGKKDAATALFNLCI, QGNK…VLAS, and QVAKTAILRANAIPPLIDCLQKDQPRNRENAAAILLCLCK.

The enzyme catalyses S-ubiquitinyl-[E2 ubiquitin-conjugating enzyme]-L-cysteine + [acceptor protein]-L-lysine = [E2 ubiquitin-conjugating enzyme]-L-cysteine + N(6)-ubiquitinyl-[acceptor protein]-L-lysine.. It participates in protein modification; protein ubiquitination. Its function is as follows. Functions as an E3 ubiquitin ligase. This chain is U-box domain-containing protein 10 (PUB10), found in Arabidopsis thaliana (Mouse-ear cress).